The primary structure comprises 425 residues: CinA-like protein (425 aa).

The protein belongs to the CinA family.

In Shewanella sp. (strain MR-4), this protein is CinA-like protein.